The following is an 85-amino-acid chain: KAEREKERRMANNARERLRVRDINEAFKELGRMVQLHLKSDKPQTKLLILHQAVAVILSLEQQVRERNLNPKAACLKRREEEKVS.

The 54-residue stretch at 7–60 (ERRMANNARERLRVRDINEAFKELGRMVQLHLKSDKPQTKLLILHQAVAVILSL) folds into the bHLH domain. A class A specific domain region spans residues 62 to 85 (QQVRERNLNPKAACLKRREEEKVS).

As to quaternary structure, efficient DNA binding requires dimerization with another bHLH protein. Forms homo- or heterooligomers with myogenin.

The protein resides in the nucleus. Functionally, transcription factor that binds to the immunoglobulin enhancer Mu-E5/KE5-motif. Involved in the initiation of neuronal differentiation. Binds to the E-box present in the somatostatin receptor 2 initiator element (SSTR2-INR) to activate transcription. This chain is Transcription factor 4 (TCF4), found in Gallus gallus (Chicken).